The chain runs to 520 residues: MAILDSAGVTTVTENGGGEFVDLDRLRRRKSRSDSSNGLLLSGSDNNSPSDDVGAPADVRDRIDSVVNDDAQGTANLAGDNNGGGDNNGGGRGGGEGRGNADATFTYRPSVPAHRRARESPLSSDAIFKQSHAGLFNLCVVVLIAVNSRLIIENLMKYGWLIRTDFWFSSRSLRDWPLFMCCISLSIFPLAAFTVEKLVLQKYISEPVVIFLHIIITMTEVLYPVYVTLRCDSAFLSGVTLMLLTCIVWLKLVSYAHTSYDIRSLANAADKANPEVSYYVSLKSLAYFMVAPTLCYQPSYPRSACIRKGWVARQFAKLVIFTGFMGFIIEQYINPIVRNSKHPLKGDLLYAIERVLKLSVPNLYVWLCMFYCFFHLWLNILAELLCFGDREFYKDWWNAKSVGDYWRMWNMPVHKWMVRHIYFPCLRSKIPKTLAIIIAFLVSAVFHELCIAVPCRLFKLWAFLGIMFQVPLVFITNYLQERFGSTVGNMIFWFIFCIFGQPMCVLLYYHDLMNRKGSMS.

Disordered regions lie at residues 28–57 (RRKS…GAPA) and 72–116 (QGTA…AHRR). Residues 34-54 (DSSNGLLLSGSDNNSPSDDVG) are compositionally biased toward low complexity. Positions 81 to 98 (NNGGGDNNGGGRGGGEGR) are enriched in gly residues. Helical transmembrane passes span 126–146 (AIFK…LIAV), 176–196 (WPLF…FTVE), 207–227 (PVVI…PVYV), 233–253 (SAFL…LKLV), 276–296 (VSYY…TLCY), 317–337 (KLVI…NPIV), and 365–385 (VWLC…AELL). Positions 392–398 (FYKDWWN) match the FYXDWWN motif motif. 3 helical membrane-spanning segments follow: residues 434–454 (LAII…IAVP), 457–477 (LFKL…FITN), and 487–507 (VGNM…CVLL). His447 is an active-site residue.

Belongs to the membrane-bound acyltransferase family. Sterol o-acyltransferase subfamily. As to quaternary structure, interacts with LPCAT2 and LPAT2. Ubiquitous. Highest expression in young developing seeds.

It localises to the plastid. Its subcellular location is the chloroplast membrane. It is found in the endoplasmic reticulum membrane. The catalysed reaction is an acyl-CoA + a 1,2-diacyl-sn-glycerol = a triacyl-sn-glycerol + CoA. The enzyme catalyses 1,2-di-(9Z-octadecenoyl)-sn-glycerol + (9Z)-octadecenoyl-CoA = 1,2,3-tri-(9Z-octadecenoyl)-glycerol + CoA. Its pathway is glycerolipid metabolism; triacylglycerol biosynthesis. Partially inhibited by niacin. Functionally, major contributor to triacylglycerol (TAG) synthesis and oil accumulation in seeds. Catalyzes the acylation of the sn-3 hydroxy group of sn-1,2-diacylglycerol using acyl-CoA. Can use palmitoyl-CoA and oleoyl-CoA as substrates. Can use oleoyl-CoA and linoleoyl-CoA as substrates. Has substrate preference for oleoyl-CoA compared to linoleoyl-CoA. Has complementary functions with PDAT1 that are essential for triacylglycerol synthesis and normal development of both seeds and pollen. In Arabidopsis thaliana (Mouse-ear cress), this protein is Diacylglycerol O-acyltransferase 1.